The chain runs to 428 residues: GTPase Obg (428 aa).

Residues 1 to 158 enclose the Obg domain; it reads MFVDQVKVYV…RYIVLELKVL (158 aa). Positions 117-143 are disordered; the sequence is AKGGRGGRGNTRFATPANPAPQLSEHG. Residues 159-329 form the OBG-type G domain; sequence ADVGLVGFPS…LLFEVANQLE (171 aa). GTP is bound by residues 165–172, 190–194, 212–215, 282–285, and 310–312; these read GFPSVGKS, FTTLV, DLPG, NKMD, and SAV. Residues S172 and T192 each contribute to the Mg(2+) site. The region spanning 350–428 is the OCT domain; the sequence is TMEDEEIPFN…LLEFEFEFID (79 aa).

The protein belongs to the TRAFAC class OBG-HflX-like GTPase superfamily. OBG GTPase family. Monomer. Mg(2+) is required as a cofactor.

It localises to the cytoplasm. In terms of biological role, an essential GTPase which binds GTP, GDP and possibly (p)ppGpp with moderate affinity, with high nucleotide exchange rates and a fairly low GTP hydrolysis rate. Plays a role in control of the cell cycle, stress response, ribosome biogenesis and in those bacteria that undergo differentiation, in morphogenesis control. This is GTPase Obg from Bacillus velezensis (strain DSM 23117 / BGSC 10A6 / LMG 26770 / FZB42) (Bacillus amyloliquefaciens subsp. plantarum).